The sequence spans 604 residues: M-phase inducer phosphatase cdc-25.1 (604 aa).

Disordered regions lie at residues 33-67 (PKTLFEEDGSSRDSGVSMTSCSDKSDASPEEDVDF) and 127-188 (EKRV…PFGD). Residues 44–54 (RDSGVSMTSCS) are compositionally biased toward polar residues. Residues 127 to 138 (EKRVMSERPTDN) show a composition bias toward basic and acidic residues. The region spanning 305–413 (FDKKYIIVDC…LWSTAECRQI (109 aa)) is the Rhodanese domain. 2 disordered regions span residues 443 to 464 (ASLKPNGETSHREEKKKRCTRS) and 562 to 588 (DFPDRPSESSSTTPAGEHLPLGEGGHQ).

This sequence belongs to the MPI phosphatase family.

It carries out the reaction O-phospho-L-tyrosyl-[protein] + H2O = L-tyrosyl-[protein] + phosphate. This chain is M-phase inducer phosphatase cdc-25.1 (cdc-25.1), found in Caenorhabditis elegans.